Consider the following 138-residue polypeptide: Basic phospholipase A2 BP-I (138 aa).

The N-terminal stretch at 1-16 (MRTLWIMAVLLLGVDG) is a signal peptide. Cystine bridges form between cysteine 42/cysteine 132, cysteine 44/cysteine 60, cysteine 59/cysteine 112, cysteine 65/cysteine 138, cysteine 66/cysteine 105, cysteine 73/cysteine 98, and cysteine 91/cysteine 103. Glycine 45 and glycine 47 together coordinate Ca(2+). Histidine 63 is a catalytic residue. Aspartate 106 is an active-site residue.

It belongs to the phospholipase A2 family. Group II subfamily. K49 sub-subfamily. Requires Ca(2+) as cofactor. Expressed by the venom gland.

The protein localises to the secreted. The enzyme catalyses a 1,2-diacyl-sn-glycero-3-phosphocholine + H2O = a 1-acyl-sn-glycero-3-phosphocholine + a fatty acid + H(+). Snake venom phospholipase A2 (PLA2) that has strong myotoxic activity with a low phospholipase A2 activity. PLA2 catalyzes the calcium-dependent hydrolysis of the 2-acyl groups in 3-sn-phosphoglycerides. This chain is Basic phospholipase A2 BP-I, found in Protobothrops flavoviridis (Habu).